The following is a 329-amino-acid chain: MQGSVTEFLKPRLVDIEQVSTTHAKVTLEPLERGFGHTLGNALRRILLSSMPGCAVTEVEIDGVLHEYSTKEGVHEDILEILLNLKGLAIKVEGKDEVILTLNKSGAGPVVAGDITHDGDVEIANPEHVICHLTDDHAEISMRIKVERGRGYVPASARIHTEEDERPIGRLLVDATYSPVDRIAYSVEAARVEQRTDLDKLVIDMETNGTLDPEEAIRRAATILAEQLDAFVDLRDVRVPEEKEEKPEFDPILLRPVDDLELTVRSANCLKAEAIHYIGDLVQRTEVELLKTPNLGKKSLTEIKDVLASRGLSLGMRLENWPPASIAED.

An alpha N-terminal domain (alpha-NTD) region spans residues 1–235; the sequence is MQGSVTEFLK…EQLDAFVDLR (235 aa). The interval 249–329 is alpha C-terminal domain (alpha-CTD); sequence FDPILLRPVD…NWPPASIAED (81 aa).

The protein belongs to the RNA polymerase alpha chain family. As to quaternary structure, homodimer. The RNAP catalytic core consists of 2 alpha, 1 beta, 1 beta' and 1 omega subunit. When a sigma factor is associated with the core the holoenzyme is formed, which can initiate transcription.

It catalyses the reaction RNA(n) + a ribonucleoside 5'-triphosphate = RNA(n+1) + diphosphate. Functionally, DNA-dependent RNA polymerase catalyzes the transcription of DNA into RNA using the four ribonucleoside triphosphates as substrates. The protein is DNA-directed RNA polymerase subunit alpha of Photobacterium profundum (strain SS9).